The chain runs to 365 residues: Regulatory protein RapG (365 aa).

TPR repeat units follow at residues 135–168 (GKLYYKLGQNIVSLNHTRQAVKTFREETDYKKKL), 169–202 (ASALITMSGNFTEMSQFEEAEAYLDEAIRITSEL), 209–242 (AQLLHNFGLLHAQSGKSEEAVSKLEEALQNDEYA), 244–284 (SAYY…EPNR), and 326–359 (RELSILAGERYRELELYKEAAHFFYEALQIEELI).

It belongs to the Rap family.

The protein resides in the cytoplasm. Its activity is regulated as follows. Inhibited by PhrG. Its function is as follows. Involved in the regulation of expression of DegU-controlled genes. Inhibits the binding of DegU to the promoter regions of aprE, coding for an extracellular alkaline protease, and comK, a master regulator for development of genetic competence. RapG does not stimulate dephosphorylation of DegU-P. In Bacillus subtilis (strain 168), this protein is Regulatory protein RapG (rapG).